The chain runs to 553 residues: Solute carrier family 45 member 3 (553 aa).

11 helical membrane-spanning segments follow: residues 19–39 (LLVN…ITYV), 52–72 (FMTM…PLLG), 88–108 (FIWA…RAGW), 120–140 (LELA…QVCF), 161–181 (YSVY…LPAI), 198–218 (CLFG…LLVA), 275–295 (FVAE…YTDF), 323–343 (MGSL…LVMD), 353–373 (AVYL…CLSH), 382–402 (AALT…LASL), and 522–542 (AYMV…TQVV).

It belongs to the glycoside-pentoside-hexuronide (GPH) cation symporter transporter (TC 2.A.2) family. Prostate specific. Expressed in all prostatic glandular cells. Expressed both in normal and cancerous prostates.

It localises to the membrane. It catalyses the reaction sucrose(out) + H(+)(out) = sucrose(in) + H(+)(in). Its function is as follows. Proton-associated sucrose transporter. May be able to transport also glucose and fructose. The sequence is that of Solute carrier family 45 member 3 from Homo sapiens (Human).